Here is a 2936-residue protein sequence, read N- to C-terminus: Neurobeachin (2936 aa).

The interval 961-985 (ENIKKGKKGNVSTISGLSSQTAGAK) is disordered. Residues 970 to 982 (NVSTISGLSSQTA) show a composition bias toward polar residues. A phosphoserine mark is found at Ser-1001 and Ser-1004. 2 stretches are compositionally biased toward polar residues: residues 1203–1220 (TSDG…SSTK) and 1231–1241 (TLETESSNSKA). Disordered regions lie at residues 1203–1222 (TSDG…TKGL), 1231–1265 (TLET…ESGK), and 1270–1289 (IQTT…QQDR). Over residues 1253–1265 (DTERSDDGKESGK) the composition is skewed to basic and acidic residues. A compositionally biased stretch (polar residues) spans 1270-1286 (IQTTATTQAVQGRSSTQ). The WD 1 repeat unit spans residues 1316–1358 (TTMFRIPEFKWSPMHQRLLTDLLFALETDVHVWRSHSTKSVMD). Disordered stretches follow at residues 1480 to 1521 (QRDR…LSPI), 1639 to 1667 (PDTV…DSGM), 1701 to 1721 (VKKS…PAPS), and 1830 to 1850 (TGAV…VNGA). Ser-1519 carries the phosphoserine modification. Residues 1701–1714 (VKKSQESLTEHPSE) are compositionally biased toward basic and acidic residues. Phosphoserine occurs at positions 1704 and 1707. The span at 1835 to 1845 (SGSSSSSSSSS) shows a compositional bias: low complexity. Ser-2128 is modified (phosphoserine). The BEACH-type PH domain occupies 2137–2245 (NLAGPVVLST…TVKKVVYSLP (109 aa)). Positions 2264–2553 (ATPRQLYKSS…QLLIEPHPPR (290 aa)) constitute a BEACH domain. Ser-2565 carries the post-translational modification Phosphoserine. 4 WD repeats span residues 2708-2751 (GHWD…HIIG), 2768-2808 (GHDH…RALE), 2850-2889 (EIND…QLYI), and 2892-2931 (GCDA…WHYE).

The protein belongs to the WD repeat neurobeachin family. As to quaternary structure, interacts with RII subunit of PKA. Forebrain, brainstem and cerebellum.

The protein resides in the membrane. It is found in the endomembrane system. Its subcellular location is the postsynaptic cell membrane. Functionally, binds to type II regulatory subunits of protein kinase A and anchors/targets them to the membrane. May anchor the kinase to cytoskeletal and/or organelle-associated proteins. May have a role in membrane trafficking. The sequence is that of Neurobeachin (Nbea) from Mus musculus (Mouse).